Consider the following 294-residue polypeptide: Ribosomal protein L11 methyltransferase (294 aa).

The S-adenosyl-L-methionine site is built by T146, G167, D189, and N231.

It belongs to the methyltransferase superfamily. PrmA family.

The protein localises to the cytoplasm. It catalyses the reaction L-lysyl-[protein] + 3 S-adenosyl-L-methionine = N(6),N(6),N(6)-trimethyl-L-lysyl-[protein] + 3 S-adenosyl-L-homocysteine + 3 H(+). Functionally, methylates ribosomal protein L11. The protein is Ribosomal protein L11 methyltransferase of Aliivibrio salmonicida (strain LFI1238) (Vibrio salmonicida (strain LFI1238)).